The chain runs to 378 residues: tRNA-specific 2-thiouridylase MnmA (378 aa).

Residues 6–13 (AMSGGVDS) and L32 contribute to the ATP site. The Nucleophile role is filled by C101. An intrachain disulfide couples C101 to C199. ATP is bound at residue G125. The interaction with tRNA stretch occupies residues 148–150 (KDQ). C199 (cysteine persulfide intermediate) is an active-site residue.

This sequence belongs to the MnmA/TRMU family.

The protein localises to the cytoplasm. It catalyses the reaction S-sulfanyl-L-cysteinyl-[protein] + uridine(34) in tRNA + AH2 + ATP = 2-thiouridine(34) in tRNA + L-cysteinyl-[protein] + A + AMP + diphosphate + H(+). Functionally, catalyzes the 2-thiolation of uridine at the wobble position (U34) of tRNA, leading to the formation of s(2)U34. This is tRNA-specific 2-thiouridylase MnmA from Micrococcus luteus (strain ATCC 4698 / DSM 20030 / JCM 1464 / CCM 169 / CCUG 5858 / IAM 1056 / NBRC 3333 / NCIMB 9278 / NCTC 2665 / VKM Ac-2230) (Micrococcus lysodeikticus).